The following is a 405-amino-acid chain: Transposase from transposon Tn1545 (405 aa).

Residues 79–163 (GKKMTLCQLY…SLKASFYIAI (85 aa)) form the Core-binding (CB) domain. Positions 186-392 (VPKTVLTEEQ…TFDSAMAEMK (207 aa)) constitute a Tyr recombinase domain. Active-site residues include arginine 225, lysine 264, histidine 343, arginine 346, and histidine 369. Catalysis depends on tyrosine 379, which acts as the O-(3'-phospho-DNA)-tyrosine intermediate.

This sequence belongs to the 'phage' integrase family.

This chain is Transposase from transposon Tn1545 (int), found in Streptococcus agalactiae serotype V (strain ATCC BAA-611 / 2603 V/R).